The following is a 212-amino-acid chain: MAPTDGAAPDGVDFYDRPVLAVAPALLGATVWHGPVAVRITEVEAYGGLDDPASHAYRGPTPRAAVMFGPPGRAYVYLSYGVHWCLNVVCGPVGSASAVLLRSGEVVAGRDLVAGRFPRLVEADLARGPGRLGRALAVTGALSGTTITGPGPVTVALAGGRGIRPPGPPGISGGRVRRGPRAGIRVATEWPWRFWLAGEATVSGPRPPRRPR.

This sequence belongs to the DNA glycosylase MPG family.

The sequence is that of Putative 3-methyladenine DNA glycosylase from Frankia casuarinae (strain DSM 45818 / CECT 9043 / HFP020203 / CcI3).